The chain runs to 285 residues: MSANVQVSGQLSSGPSLPACIVLSAVSLLCFVAGFGTGAEFVRFLSFGAIFRNISGGLDGEIPLTWSEAIRNTQFQCCIGIDIGLLFLFVLQHSLMAWTAVKKNVLHVFGVLQRSIYILCTALSLQVLMRFWQPCPHGPYLWNVSSDPWSAWLPLLCALVHTISWLLIFSVLLIFDYAELMGIKQVYYFCLGMGDPLSHKSPRVARLYAHLRHPIYLELLLILWAVPCLPPDRLILAIFFTLYLSLVHRLDVQDYAYLRSQLEKKFLLFSREEASAVGGQIRKNN.

Residues 1 to 16 lie on the Nuclear side of the membrane; that stretch reads MSANVQVSGQLSSGPS. The chain crosses the membrane as a helical span at residues 17 to 44; the sequence is LPACIVLSAVSLLCFVAGFGTGAEFVRF. The Perinuclear space segment spans residues 45 to 74; that stretch reads LSFGAIFRNISGGLDGEIPLTWSEAIRNTQ. A helical membrane pass occupies residues 75–96; sequence FQCCIGIDIGLLFLFVLQHSLM. The Nuclear portion of the chain corresponds to 97–113; it reads AWTAVKKNVLHVFGVLQ. A helical membrane pass occupies residues 114–130; the sequence is RSIYILCTALSLQVLMR. At 131–149 the chain is on the perinuclear space side; it reads FWQPCPHGPYLWNVSSDPW. The helical transmembrane segment at 150–180 threads the bilayer; it reads SAWLPLLCALVHTISWLLIFSVLLIFDYAEL. At 181–207 the chain is on the nuclear side; sequence MGIKQVYYFCLGMGDPLSHKSPRVARL. Residues 208–226 traverse the membrane as a helical segment; it reads YAHLRHPIYLELLLILWAV. Over 227–232 the chain is Perinuclear space; it reads PCLPPD. Residues 233-250 form a helical membrane-spanning segment; sequence RLILAIFFTLYLSLVHRL. At 251-285 the chain is on the nuclear side; the sequence is DVQDYAYLRSQLEKKFLLFSREEASAVGGQIRKNN.

The protein belongs to the nurim family.

Its subcellular location is the nucleus inner membrane. The chain is Nurim (nrm) from Xenopus laevis (African clawed frog).